A 748-amino-acid polypeptide reads, in one-letter code: 5-methyltetrahydropteroyltriglutamate--homocysteine methyltransferase (748 aa).

K111 is a 5-methyltetrahydropteroyltri-L-glutamate binding site. L-homocysteine is bound by residues I428–S430 and E478. L-methionine-binding positions include I428 to S430 and E478. 5-methyltetrahydropteroyltri-L-glutamate contacts are provided by residues R509–C510 and W555. D593 is an L-homocysteine binding site. D593 contacts L-methionine. A 5-methyltetrahydropteroyltri-L-glutamate-binding site is contributed by E599. 3 residues coordinate Zn(2+): H635, C637, and E659. The active-site Proton donor is H687. Residue C719 participates in Zn(2+) binding.

This sequence belongs to the vitamin-B12 independent methionine synthase family. Zn(2+) serves as cofactor.

The enzyme catalyses 5-methyltetrahydropteroyltri-L-glutamate + L-homocysteine = tetrahydropteroyltri-L-glutamate + L-methionine. It participates in amino-acid biosynthesis; L-methionine biosynthesis via de novo pathway; L-methionine from L-homocysteine (MetE route): step 1/1. Its function is as follows. Catalyzes the transfer of a methyl group from 5-methyltetrahydrofolate to homocysteine resulting in methionine formation. In Herpetosiphon aurantiacus (strain ATCC 23779 / DSM 785 / 114-95), this protein is 5-methyltetrahydropteroyltriglutamate--homocysteine methyltransferase.